The chain runs to 235 residues: Ribonuclease PH (235 aa).

Phosphate-binding positions include R86 and 124 to 126 (GTR).

Belongs to the RNase PH family. As to quaternary structure, homohexameric ring arranged as a trimer of dimers.

The catalysed reaction is tRNA(n+1) + phosphate = tRNA(n) + a ribonucleoside 5'-diphosphate. In terms of biological role, phosphorolytic 3'-5' exoribonuclease that plays an important role in tRNA 3'-end maturation. Removes nucleotide residues following the 3'-CCA terminus of tRNAs; can also add nucleotides to the ends of RNA molecules by using nucleoside diphosphates as substrates, but this may not be physiologically important. Probably plays a role in initiation of 16S rRNA degradation (leading to ribosome degradation) during starvation. In Francisella tularensis subsp. tularensis (strain FSC 198), this protein is Ribonuclease PH.